The sequence spans 283 residues: 4-diphosphocytidyl-2-C-methyl-D-erythritol kinase (283 aa).

Residue Lys10 is part of the active site. Residue 99-109 (PMGGGLGGGSS) participates in ATP binding. Asp141 is an active-site residue.

The protein belongs to the GHMP kinase family. IspE subfamily. Homodimer.

It carries out the reaction 4-CDP-2-C-methyl-D-erythritol + ATP = 4-CDP-2-C-methyl-D-erythritol 2-phosphate + ADP + H(+). It functions in the pathway isoprenoid biosynthesis; isopentenyl diphosphate biosynthesis via DXP pathway; isopentenyl diphosphate from 1-deoxy-D-xylulose 5-phosphate: step 3/6. Its function is as follows. Catalyzes the phosphorylation of the position 2 hydroxy group of 4-diphosphocytidyl-2C-methyl-D-erythritol. This is 4-diphosphocytidyl-2-C-methyl-D-erythritol kinase from Escherichia coli O7:K1 (strain IAI39 / ExPEC).